A 524-amino-acid polypeptide reads, in one-letter code: Ribonuclease Y (524 aa).

The chain crosses the membrane as a helical span at residues 3-23; the sequence is IVINLFLLVPASIVFFAAGFF. Positions 96 to 127 are disordered; the sequence is QQREGQLKKQAQDNRDMERRLQDQRKENEQVQ. The segment covering 100 to 124 has biased composition (basic and acidic residues); it reads GQLKKQAQDNRDMERRLQDQRKENE. The 67-residue stretch at 214–280 folds into the KH domain; that stretch reads ALSVVHIQTD…KLTLQKLLSE (67 aa). In terms of domain architecture, HD spans 340-432; the sequence is LLQHSREVAM…VDAANVISLS (93 aa).

It belongs to the RNase Y family.

The protein localises to the cell membrane. Its function is as follows. Endoribonuclease that initiates mRNA decay. The protein is Ribonuclease Y of Chlorobium phaeovibrioides (strain DSM 265 / 1930) (Prosthecochloris vibrioformis (strain DSM 265)).